We begin with the raw amino-acid sequence, 104 residues long: UPF0134 protein MPN_104 (104 aa).

It belongs to the UPF0134 family.

This is UPF0134 protein MPN_104 from Mycoplasma pneumoniae (strain ATCC 29342 / M129 / Subtype 1) (Mycoplasmoides pneumoniae).